The primary structure comprises 414 residues: Protein FAM81B (414 aa).

Residues Met1–Pro13 are compositionally biased toward polar residues. The segment at Met1–Pro43 is disordered. Coiled-coil stretches lie at residues Asn70–Ala94, Leu121–Ala149, Lys188–Thr223, and Leu266–Ser414.

This sequence belongs to the FAM81 family.

This is Protein FAM81B (FAM81B) from Bos taurus (Bovine).